The sequence spans 278 residues: Large ribosomal subunit protein uL24m (278 aa).

The 34-residue stretch at 109-142 (FFPGDLVQVMVGKDKGRQGLVLTTSRDSSDVIVD) folds into the KOW domain.

This sequence belongs to the universal ribosomal protein uL24 family.

The protein resides in the mitochondrion. The chain is Large ribosomal subunit protein uL24m (mrpl-24) from Caenorhabditis elegans.